The following is a 227-amino-acid chain: Izumo sperm-egg fusion protein 4 (227 aa).

Positions 1–24 (MFGQGRLGQAMALLLFLGMTAALA) are cleaved as a signal peptide. Asn-153 and Asn-214 each carry an N-linked (GlcNAc...) asparagine glycan.

Belongs to the Izumo family.

The protein localises to the secreted. This chain is Izumo sperm-egg fusion protein 4 (Izumo4), found in Mus musculus (Mouse).